A 231-amino-acid chain; its full sequence is Proteasome subunit alpha type-2 (231 aa).

It belongs to the peptidase T1A family. As to quaternary structure, the 26S proteasome consists of a 20S proteasome core and two 19S regulatory subunits. The 20S proteasome core is composed of 28 subunits that are arranged in four stacked rings, resulting in a barrel-shaped structure. The two end rings are each formed by seven alpha subunits, and the two central rings are each formed by seven beta subunits. The catalytic chamber with the active sites is on the inside of the barrel.

The protein resides in the cytoplasm. It localises to the nucleus. The proteasome is a multicatalytic proteinase complex which is characterized by its ability to cleave peptides with Arg, Phe, Tyr, Leu, and Glu adjacent to the leaving group at neutral or slightly basic pH. The proteasome has an ATP-dependent proteolytic activity. The sequence is that of Proteasome subunit alpha type-2 (pas-2) from Caenorhabditis elegans.